We begin with the raw amino-acid sequence, 339 residues long: Foldase protein PrsA (339 aa).

The N-terminal stretch at 1–26 is a signal peptide; sequence MKHLKNNTKKFTALLFALLFSMSIAG. Residue C27 is the site of N-palmitoyl cysteine attachment. The S-diacylglycerol cysteine moiety is linked to residue C27. The PpiC domain occupies 197–287; it reads KPTFHAQHVL…FGYHVIKLID (91 aa).

It belongs to the PrsA family.

Its subcellular location is the cell membrane. The enzyme catalyses [protein]-peptidylproline (omega=180) = [protein]-peptidylproline (omega=0). Its function is as follows. Plays a major role in protein secretion by helping the post-translocational extracellular folding of several secreted proteins. The sequence is that of Foldase protein PrsA from Clostridium tetani (strain Massachusetts / E88).